The primary structure comprises 268 residues: tRNA pseudouridine synthase A (268 aa).

Asp52 (nucleophile) is an active-site residue. Residue Tyr113 participates in substrate binding.

This sequence belongs to the tRNA pseudouridine synthase TruA family. As to quaternary structure, homodimer.

It catalyses the reaction uridine(38/39/40) in tRNA = pseudouridine(38/39/40) in tRNA. Its function is as follows. Formation of pseudouridine at positions 38, 39 and 40 in the anticodon stem and loop of transfer RNAs. The chain is tRNA pseudouridine synthase A from Rhizobium leguminosarum bv. trifolii (strain WSM2304).